The sequence spans 1380 residues: MASGRDERPPWRLGRLLLLMCLLLLGSSARAAHIKKAEATTTTTSAGAEAAEGQFDRYYHEEELESALREAAAAGLPGLARLFSIGRSVEGRPLWVLRLTAGLGSLIPEGDAGPDAAGPDAAGPLLPGRPQVKLVGNMHGDETVSRQVLIYLARELAAGYRRGDPRLVRLLNTTDVYLLPSLNPDGFERAREGDCGFGDGGPSGASGRDNSRGRDLNRSFPDQFSTGEPPALDEVPEVRALIEWIRRNKFVLSGNLHGGSVVASYPFDDSPEHKATGIYSKTSDDEVFKYLAKAYASNHPIMKTGEPHCPGDEDETFKDGITNGAHWYDVEGGMQDYNYVWANCFEITLELSCCKYPPASQLRQEWENNRESLITLIEKVHIGVKGFVKDSITGSGLENATISVAGINHNITTGRFGDFYRLLVPGTYNLTVVLTGYMPLTVTNVVVKEGPATEVDFSLRPTVTSVIPDTTEAVSTASTVAIPNILSGTSSSYQPIQPKDFHHHHFPDMEIFLRRFANEYPNITRLYSLGKSVESRELYVMEISDNPGVHEPGEPEFKYIGNMHGNEVVGRELLLNLIEYLCKNFGTDPEVTDLVHNTRIHLMPSMNPDGYEKSQEGDSISVIGRNNSNNFDLNRNFPDQFVQITDPTQPETIAVMSWMKSYPFVLSANLHGGSLVVNYPFDDDEQGLATYSKSPDDAVFQQIALSYSKENSQMFQGRPCKNMYPNEYFPHGITNGASWYNVPGGMQDWNYLQTNCFEVTIELGCVKYPLEKELPNFWEQNRRSLIQFMKQVHQGVRGFVLDATDGRGILNATISVAEINHPVTTYKTGDYWRLLVPGTYKITASARGYNPVTKNVTVKSEGAIQVNFTLVRSSTDSNNESKKGKGASSSTNDASDPTTKEFETLIKDLSAENGLESLMLRSSSNLALALYRYHSYKDLSEFLRGLVMNYPHITNLTNLGQSTEYRHIWSLEISNKPNVSEPEEPKIRFVAGIHGNAPVGTELLLALAEFLCLNYKKNPAVTQLVDRTRIVIVPSLNPDGRERAQEKDCTSKIGQTNARGKDLDTDFTNNASQPETKAIIENLIQKQDFSLSVALDGGSMLVTYPYDKPVQTVENKETLKHLASLYANNHPSMHMGQPSCPNKSDENIPGGVMRGAEWHSHLGSMKDYSVTYGHCPEITVYTSCCYFPSAARLPSLWADNKRSLLSMLVEVHKGVHGFVKDKTGKPISKAVIVLNEGIKVQTKEGGYFHVLLAPGVHNIIAIADGYQQQHSQVFVHHDAASSVVIVFDTDNRIFGLPRELVVTVSGATMSALILTACIIWCICSIKSNRHKDGFHRLRQHHDEYEDEIRMMSTGSKKSLLSHEFQDETDTEEETLYSSKH.

The signal sequence occupies residues 1 to 31 (MASGRDERPPWRLGRLLLLMCLLLLGSSARA). The Extracellular segment spans residues 32 to 1299 (AHIKKAEATT…DNRIFGLPRE (1268 aa)). One can recognise a Peptidase M14 1 domain in the interval 57–380 (RYYHEEELES…ESLITLIEKV (324 aa)). Positions 139 and 142 each coordinate Zn(2+). Residues 162–164 (RGD) carry the Cell attachment site motif. Asn172 carries an N-linked (GlcNAc...) asparagine glycan. A disordered region spans residues 190–232 (AREGDCGFGDGGPSGASGRDNSRGRDLNRSFPDQFSTGEPPAL). Residues 195 to 204 (CGFGDGGPSG) are compositionally biased toward gly residues. Asn217 carries an N-linked (GlcNAc...) asparagine glycan. Residue His257 coordinates Zn(2+). Tyr265 bears the Phosphotyrosine mark. Ser270 is modified (phosphoserine). The active-site Proton donor/acceptor is the Glu350. N-linked (GlcNAc...) asparagine glycosylation is found at Asn399, Asn410, Asn429, and Asn522. A Peptidase M14 2 domain is found at 502 to 792 (HHHHFPDMEI…RSLIQFMKQV (291 aa)). His564 and Glu567 together coordinate Zn(2+). An N-linked (GlcNAc...) asparagine glycan is attached at Asn626. His671 contacts Zn(2+). Glu762 functions as the Proton donor/acceptor in the catalytic mechanism. 4 N-linked (GlcNAc...) asparagine glycosylation sites follow: Asn811, Asn855, Asn867, and Asn879. Residues 874 to 899 (STDSNNESKKGKGASSSTNDASDPTT) form a disordered region. The span at 887 to 897 (ASSSTNDASDP) shows a compositional bias: polar residues. Positions 932–1211 (RYHSYKDLSE…RSLLSMLVEV (280 aa)) constitute a Peptidase M14 3 domain. N-linked (GlcNAc...) asparagine glycans are attached at residues Asn955, Asn978, Asn1070, and Asn1142. The helical transmembrane segment at 1300-1320 (LVVTVSGATMSALILTACIIW) threads the bilayer. S-palmitoyl cysteine attachment occurs at residues Cys1317, Cys1321, and Cys1323. Topologically, residues 1321 to 1380 (CICSIKSNRHKDGFHRLRQHHDEYEDEIRMMSTGSKKSLLSHEFQDETDTEEETLYSSKH) are cytoplasmic. Phosphoserine occurs at positions 1358 and 1361. The tract at residues 1359–1380 (LLSHEFQDETDTEEETLYSSKH) is disordered. Residues Thr1368 and Thr1370 each carry the phosphothreonine modification.

Belongs to the peptidase M14 family. Zn(2+) is required as a cofactor. Highly expressed in placenta, pancreas and hepatoma cells. Lower levels found in skeletal muscle, heart and colon carcinoma and melanoma cell lines.

It is found in the cell membrane. The enzyme catalyses Releases C-terminal Arg and Lys from polypeptides.. The chain is Carboxypeptidase D (CPD) from Homo sapiens (Human).